A 679-amino-acid polypeptide reads, in one-letter code: Single-strand DNA endonuclease ASTE1 (679 aa).

Positions 351–400 are interaction with SHLD2; the sequence is TILPTQVENMQQPNAHRISQPIRQIIYGLLLNASPHLDKTSWNALPPQPL. The segment at 625–645 is disordered; the sequence is RSNSKKKRQKKQNTSCSKNRG. A compositionally biased stretch (basic residues) spans 626 to 635; that stretch reads SNSKKKRQKK.

It belongs to the asteroid family. Interacts with SHLD1, SHLD2, SHLD3, RIF1 and MAD2L2/REV7.

Functionally, structure-specific DNA endonuclease that specifically cleaves single-stranded DNA and 3' overhang DNA. Contributes to the control of DNA double-strand break repair choice by antagonizing BRCA1-dependent homologous recombination (HR) and promoting non-homologous end-joining (NHEJ). Recruited to the single-stranded DNA ends by SHLD2 and cleaves the 3' exposed DNA ends, therefore inhibiting DNA end resection (necessary for HR) and promoting DNA end protection (necessary for NHEJ). This chain is Single-strand DNA endonuclease ASTE1 (ASTE1), found in Pongo abelii (Sumatran orangutan).